A 98-amino-acid polypeptide reads, in one-letter code: NADH-ubiquinone oxidoreductase chain 4L (98 aa).

Helical transmembrane passes span 1–21 (MHYI…GALL), 29–49 (SLLC…LIAL), and 61–81 (IILL…LVMV).

Belongs to the complex I subunit 4L family. In terms of assembly, core subunit of respiratory chain NADH dehydrogenase (Complex I) which is composed of 45 different subunits.

The protein localises to the mitochondrion inner membrane. It catalyses the reaction a ubiquinone + NADH + 5 H(+)(in) = a ubiquinol + NAD(+) + 4 H(+)(out). Functionally, core subunit of the mitochondrial membrane respiratory chain NADH dehydrogenase (Complex I) which catalyzes electron transfer from NADH through the respiratory chain, using ubiquinone as an electron acceptor. Part of the enzyme membrane arm which is embedded in the lipid bilayer and involved in proton translocation. The polypeptide is NADH-ubiquinone oxidoreductase chain 4L (MT-ND4L) (Procavia capensis (Rock hyrax)).